Here is a 291-residue protein sequence, read N- to C-terminus: Ribosomal RNA small subunit methyltransferase H (291 aa).

Residues 31 to 33 (GGY), aspartate 49, phenylalanine 76, aspartate 97, and glutamine 104 each bind S-adenosyl-L-methionine.

This sequence belongs to the methyltransferase superfamily. RsmH family.

The protein resides in the cytoplasm. It catalyses the reaction cytidine(1402) in 16S rRNA + S-adenosyl-L-methionine = N(4)-methylcytidine(1402) in 16S rRNA + S-adenosyl-L-homocysteine + H(+). Functionally, specifically methylates the N4 position of cytidine in position 1402 (C1402) of 16S rRNA. The sequence is that of Ribosomal RNA small subunit methyltransferase H from Anaplasma marginale (strain Florida).